The primary structure comprises 142 residues: Large ribosomal subunit protein uL11 (142 aa).

This sequence belongs to the universal ribosomal protein uL11 family. Part of the ribosomal stalk of the 50S ribosomal subunit. Interacts with L10 and the large rRNA to form the base of the stalk. L10 forms an elongated spine to which L12 dimers bind in a sequential fashion forming a multimeric L10(L12)X complex. In terms of processing, one or more lysine residues are methylated.

Forms part of the ribosomal stalk which helps the ribosome interact with GTP-bound translation factors. The sequence is that of Large ribosomal subunit protein uL11 from Mycobacterium ulcerans (strain Agy99).